A 146-amino-acid polypeptide reads, in one-letter code: MLDILEIRKYLPHRYPFLMIDRVVELIEGESITAYKNVSINEEIFQGHFPHFPVFPGVLLIEAMAQACGVLGFKTANKTPEDGSIYLFAGIDGVRFKRQVVPGDRVYFECKVVSAKRGIWKFDCVAKVDGELVTSATIMCADRVVG.

The active site involves histidine 48.

This sequence belongs to the thioester dehydratase family. FabZ subfamily.

Its subcellular location is the cytoplasm. It catalyses the reaction a (3R)-hydroxyacyl-[ACP] = a (2E)-enoyl-[ACP] + H2O. Involved in unsaturated fatty acids biosynthesis. Catalyzes the dehydration of short chain beta-hydroxyacyl-ACPs and long chain saturated and unsaturated beta-hydroxyacyl-ACPs. This chain is 3-hydroxyacyl-[acyl-carrier-protein] dehydratase FabZ, found in Teredinibacter turnerae (strain ATCC 39867 / T7901).